We begin with the raw amino-acid sequence, 362 residues long: Methionine import ATP-binding protein MetN (362 aa).

The ABC transporter domain occupies 2-241; sequence IHIKNLSKTY…PQHDVTRAMV (240 aa). 38–45 contributes to the ATP binding site; sequence GPSGAGKS.

Belongs to the ABC transporter superfamily. Methionine importer (TC 3.A.1.24) family. As to quaternary structure, the complex is composed of two ATP-binding proteins (MetN), two transmembrane proteins (MetI) and a solute-binding protein (MetQ).

The protein localises to the cell inner membrane. It carries out the reaction L-methionine(out) + ATP + H2O = L-methionine(in) + ADP + phosphate + H(+). It catalyses the reaction D-methionine(out) + ATP + H2O = D-methionine(in) + ADP + phosphate + H(+). In terms of biological role, part of the ABC transporter complex MetNIQ involved in methionine import. Responsible for energy coupling to the transport system. The sequence is that of Methionine import ATP-binding protein MetN from Bordetella avium (strain 197N).